The following is a 349-amino-acid chain: Aspartate carbamoyltransferase catalytic subunit (349 aa).

The carbamoyl phosphate site is built by R59 and T60. K87 is a binding site for L-aspartate. Positions 109, 142, and 145 each coordinate carbamoyl phosphate. R182 and R253 together coordinate L-aspartate. Residues G294 and P295 each contribute to the carbamoyl phosphate site.

It belongs to the aspartate/ornithine carbamoyltransferase superfamily. ATCase family. As to quaternary structure, heterododecamer (2C3:3R2) of six catalytic PyrB chains organized as two trimers (C3), and six regulatory PyrI chains organized as three dimers (R2).

It catalyses the reaction carbamoyl phosphate + L-aspartate = N-carbamoyl-L-aspartate + phosphate + H(+). Its pathway is pyrimidine metabolism; UMP biosynthesis via de novo pathway; (S)-dihydroorotate from bicarbonate: step 2/3. In terms of biological role, catalyzes the condensation of carbamoyl phosphate and aspartate to form carbamoyl aspartate and inorganic phosphate, the committed step in the de novo pyrimidine nucleotide biosynthesis pathway. The chain is Aspartate carbamoyltransferase catalytic subunit from Synechococcus sp. (strain CC9311).